A 95-amino-acid polypeptide reads, in one-letter code: Large ribosomal subunit protein uL23 (95 aa).

The protein belongs to the universal ribosomal protein uL23 family. Part of the 50S ribosomal subunit. Contacts protein L29, and trigger factor when it is bound to the ribosome.

In terms of biological role, one of the early assembly proteins it binds 23S rRNA. One of the proteins that surrounds the polypeptide exit tunnel on the outside of the ribosome. Forms the main docking site for trigger factor binding to the ribosome. The chain is Large ribosomal subunit protein uL23 from Bacillus licheniformis (strain ATCC 14580 / DSM 13 / JCM 2505 / CCUG 7422 / NBRC 12200 / NCIMB 9375 / NCTC 10341 / NRRL NRS-1264 / Gibson 46).